We begin with the raw amino-acid sequence, 369 residues long: 3-dehydroquinate synthase (369 aa).

Residues 78-83 (DGERYK), 112-116 (GVIGD), 136-137 (TT), Lys-149, Lys-158, and 176-179 (TLTT) contribute to the NAD(+) site. The Zn(2+) site is built by Glu-191, His-254, and His-271.

It belongs to the sugar phosphate cyclases superfamily. Dehydroquinate synthase family. The cofactor is NAD(+). Requires Co(2+) as cofactor. Zn(2+) is required as a cofactor.

It is found in the cytoplasm. It catalyses the reaction 7-phospho-2-dehydro-3-deoxy-D-arabino-heptonate = 3-dehydroquinate + phosphate. It functions in the pathway metabolic intermediate biosynthesis; chorismate biosynthesis; chorismate from D-erythrose 4-phosphate and phosphoenolpyruvate: step 2/7. Its function is as follows. Catalyzes the conversion of 3-deoxy-D-arabino-heptulosonate 7-phosphate (DAHP) to dehydroquinate (DHQ). In Nitrosomonas europaea (strain ATCC 19718 / CIP 103999 / KCTC 2705 / NBRC 14298), this protein is 3-dehydroquinate synthase.